The sequence spans 664 residues: DNA primase (664 aa).

The CHC2-type zinc finger occupies 40–64; it reads CPFHKEKTPSFTVSPDKQFYYCFGC. Residues 94-104 show a composition bias toward basic and acidic residues; it reads GMDVPREERGG. The disordered stretch occupies residues 94–115; the sequence is GMDVPREERGGRGHTPRQPTDS. Residues 262–344 enclose the Toprim domain; sequence DEIMVVEGYM…GKRVRFLFLP (83 aa). Glu268, Asp312, and Asp314 together coordinate Mg(2+). Residues 483 to 521 form a disordered region; the sequence is PRKSWNKDKKPWDGKKWDGKKKWDKGGRGDFKAPQRTPV. Residues 487-515 show a composition bias toward basic and acidic residues; the sequence is WNKDKKPWDGKKWDGKKKWDKGGRGDFKA.

This sequence belongs to the DnaG primase family. As to quaternary structure, monomer. Interacts with DnaB. Requires Zn(2+) as cofactor. Mg(2+) serves as cofactor.

It carries out the reaction ssDNA + n NTP = ssDNA/pppN(pN)n-1 hybrid + (n-1) diphosphate.. Functionally, RNA polymerase that catalyzes the synthesis of short RNA molecules used as primers for DNA polymerase during DNA replication. The sequence is that of DNA primase from Pseudomonas aeruginosa (strain ATCC 15692 / DSM 22644 / CIP 104116 / JCM 14847 / LMG 12228 / 1C / PRS 101 / PAO1).